A 60-amino-acid polypeptide reads, in one-letter code: UPF0391 membrane protein CCNA_00709 (60 aa).

A run of 2 helical transmembrane segments spans residues 4–24 (WAII…SGLA) and 33–53 (ILFF…GTVF).

This sequence belongs to the UPF0391 family.

The protein localises to the cell membrane. In Caulobacter vibrioides (strain NA1000 / CB15N) (Caulobacter crescentus), this protein is UPF0391 membrane protein CCNA_00709.